A 902-amino-acid chain; its full sequence is Ribonuclease E (902 aa).

An S1 motif domain is found at 39 to 119; sequence SNIYKGKITR…GTKGAALTTF (81 aa). Positions 303 and 346 each coordinate Mg(2+). 2 residues coordinate Zn(2+): cysteine 404 and cysteine 407. The required for zinc-mediated homotetramerization and catalytic activity stretch occupies residues 404 to 407; the sequence is CPRC. The segment at 881-902 is disordered; sequence GKNSAGVHSATNFSNSPVSKLK. Over residues 889–902 the composition is skewed to polar residues; that stretch reads SATNFSNSPVSKLK.

The protein belongs to the RNase E/G family. RNase E subfamily. As to quaternary structure, component of the RNA degradosome, which is a multiprotein complex involved in RNA processing and mRNA degradation. Within the RNA degradosome, RNase E assembles into a homotetramer formed by a dimer of dimers. It depends on Zn(2+) as a cofactor. Requires Mg(2+) as cofactor.

Its subcellular location is the cytoplasm. The protein resides in the cell inner membrane. It catalyses the reaction Endonucleolytic cleavage of single-stranded RNA in A- and U-rich regions.. Functionally, endoribonuclease that plays a central role in RNA processing and decay. Required for the maturation of 5S and 16S rRNAs and the majority of tRNAs. Also involved in the degradation of most mRNAs. The sequence is that of Ribonuclease E from Buchnera aphidicola subsp. Acyrthosiphon pisum (strain APS) (Acyrthosiphon pisum symbiotic bacterium).